The primary structure comprises 176 residues: MRCPYCGSLETQVKDSRPTDDASAIRRRRVCPDCGGRFTTFERVQLRELTVLKKSGRRAPFEREKLMRSLEIALRKRPVEPERVERMVNGIVRQLESQGESEIASDRIGELVMEGLRALDSVAYVRFASVYRNFREARDFNALIDELDGAAQPEAPSKDDGGTDEPPAKTRAPTRA.

The segment at 3–34 (CPYCGSLETQVKDSRPTDDASAIRRRRVCPDC) is a zinc-finger region. In terms of domain architecture, ATP-cone spans 49–139 (LTVLKKSGRR…VYRNFREARD (91 aa)). The segment at 147–176 (LDGAAQPEAPSKDDGGTDEPPAKTRAPTRA) is disordered.

The protein belongs to the NrdR family. Zn(2+) is required as a cofactor.

Functionally, negatively regulates transcription of bacterial ribonucleotide reductase nrd genes and operons by binding to NrdR-boxes. This chain is Transcriptional repressor NrdR, found in Methylocella silvestris (strain DSM 15510 / CIP 108128 / LMG 27833 / NCIMB 13906 / BL2).